Consider the following 185-residue polypeptide: Thymidine kinase (185 aa).

17–24 (GPMFAGKT) lines the ATP pocket. The active-site Proton acceptor is the E92. A substrate-binding site is contributed by F121. Zn(2+) is bound by residues C146 and C149. 166-170 (LILAG) contributes to the substrate binding site. C179 and C182 together coordinate Zn(2+).

Belongs to the thymidine kinase family.

The enzyme catalyses thymidine + ATP = dTMP + ADP + H(+). Functionally, phosphorylates thymidine. ASFV replicates in the cytoplasm of infected cells and contains genes encoding a number of enzymes needed for DNA synthesis, including thymidine kinase. Important for growth in swine macrophages in vitro and is a virus virulence factor in swine. In African swine fever virus (isolate Pig/Kenya/KEN-50/1950) (ASFV), this protein is Thymidine kinase.